The primary structure comprises 207 residues: Small ribosomal subunit protein uS4 (207 aa).

The interval lysine 31–glycine 53 is disordered. The S4 RNA-binding domain maps to cysteine 97 to valine 157.

This sequence belongs to the universal ribosomal protein uS4 family. Part of the 30S ribosomal subunit. Contacts protein S5. The interaction surface between S4 and S5 is involved in control of translational fidelity.

One of the primary rRNA binding proteins, it binds directly to 16S rRNA where it nucleates assembly of the body of the 30S subunit. In terms of biological role, with S5 and S12 plays an important role in translational accuracy. This is Small ribosomal subunit protein uS4 from Acidovorax ebreus (strain TPSY) (Diaphorobacter sp. (strain TPSY)).